A 59-amino-acid chain; its full sequence is Insulin (59 aa).

Disulfide bonds link Cys7–Cys45, Cys19–Cys58, and Cys44–Cys49.

This sequence belongs to the insulin family. As to quaternary structure, heterodimer of a B chain and an A chain linked by two disulfide bonds.

The protein resides in the secreted. Its function is as follows. Insulin decreases blood glucose concentration. It increases cell permeability to monosaccharides, amino acids and fatty acids. It accelerates glycolysis, the pentose phosphate cycle, and glycogen synthesis in liver. The chain is Insulin (ins) from Chimaera monstrosa (Rabbit fish).